A 343-amino-acid chain; its full sequence is NADH-quinone oxidoreductase subunit H (343 aa).

8 helical membrane passes run 21-41 (WTLV…LFCV), 95-115 (FILA…VVPF), 124-144 (VNVG…GVLL), 172-192 (MGFT…GDIV), 197-217 (GLWY…SVVA), 257-277 (IIMV…PPIE), 281-301 (FIPG…FFLW), and 317-337 (LGWK…GLAM).

The protein belongs to the complex I subunit 1 family. NDH-1 is composed of 14 different subunits. Subunits NuoA, H, J, K, L, M, N constitute the membrane sector of the complex.

It localises to the cell inner membrane. The enzyme catalyses a quinone + NADH + 5 H(+)(in) = a quinol + NAD(+) + 4 H(+)(out). NDH-1 shuttles electrons from NADH, via FMN and iron-sulfur (Fe-S) centers, to quinones in the respiratory chain. The immediate electron acceptor for the enzyme in this species is believed to be ubiquinone. Couples the redox reaction to proton translocation (for every two electrons transferred, four hydrogen ions are translocated across the cytoplasmic membrane), and thus conserves the redox energy in a proton gradient. This subunit may bind ubiquinone. The polypeptide is NADH-quinone oxidoreductase subunit H (Magnetococcus marinus (strain ATCC BAA-1437 / JCM 17883 / MC-1)).